We begin with the raw amino-acid sequence, 599 residues long: Prostaglandin G/H synthase 1 (599 aa).

The signal sequence occupies residues 1–23; sequence MSRSLLLWFLLFLLLLPPLPVLL. The region spanning 31-69 is the EGF-like domain; the sequence is PVNPCCYYPCQHQGICVRFGLDRYQCDCTRTGYSGPNCT. 4 disulfide bridges follow: Cys35–Cys46, Cys36–Cys158, Cys40–Cys56, and Cys58–Cys68. Asn67, Asn103, and Asn143 each carry an N-linked (GlcNAc...) asparagine glycan. His206 serves as the catalytic Proton acceptor. Tyr384 serves as the catalytic For cyclooxygenase activity. Residue His387 coordinates heme b. A disulfide bridge links Cys568 with Cys574.

Belongs to the prostaglandin G/H synthase family. Homodimer. It depends on heme b as a cofactor.

The protein resides in the microsome membrane. The protein localises to the endoplasmic reticulum membrane. The enzyme catalyses (5Z,8Z,11Z,14Z)-eicosatetraenoate + AH2 + 2 O2 = prostaglandin H2 + A + H2O. It carries out the reaction (5Z,8Z,11Z,14Z)-eicosatetraenoate + 2 O2 = prostaglandin G2. The catalysed reaction is prostaglandin G2 + AH2 = prostaglandin H2 + A + H2O. It catalyses the reaction (9Z,12Z)-octadecadienoate + AH2 + O2 = (9R)-hydroxy-(10E,12Z)-octadecadienoate + A + H2O. The enzyme catalyses (9Z,12Z)-octadecadienoate + AH2 + O2 = (9S)-hydroxy-(10E,12Z)-octadecadienoate + A + H2O. It carries out the reaction (9Z,12Z)-octadecadienoate + AH2 + O2 = (13S)-hydroxy-(9Z,11E)-octadecadienoate + A + H2O. The catalysed reaction is (9Z,12Z)-octadecadienoate + AH2 + O2 = (13R)-hydroxy-(9Z,11E)-octadecadienoate + A + H2O. Its pathway is lipid metabolism; prostaglandin biosynthesis. With respect to regulation, the cyclooxygenase activity is inhibited by nonsteroidal anti-inflammatory drugs (NSAIDs) including ibuprofen, flurbiprofen, ketoprofen, naproxen, flurbiprofen, anirolac, fenclofenac and diclofenac. Dual cyclooxygenase and peroxidase that plays an important role in the biosynthesis pathway of prostanoids, a class of C20 oxylipins mainly derived from arachidonate ((5Z,8Z,11Z,14Z)-eicosatetraenoate, AA, C20:4(n-6)), with a particular role in the inflammatory response. The cyclooxygenase activity oxygenates AA to the hydroperoxy endoperoxide prostaglandin G2 (PGG2), and the peroxidase activity reduces PGG2 to the hydroxy endoperoxide prostaglandin H2 (PGH2), the precursor of all 2-series prostaglandins and thromboxanes. This complex transformation is initiated by abstraction of hydrogen at carbon 13 (with S-stereochemistry), followed by insertion of molecular O2 to form the endoperoxide bridge between carbon 9 and 11 that defines prostaglandins. The insertion of a second molecule of O2 (bis-oxygenase activity) yields a hydroperoxy group in PGG2 that is then reduced to PGH2 by two electrons. Involved in the constitutive production of prostanoids in particular in the stomach and platelets. In gastric epithelial cells, it is a key step in the generation of prostaglandins, such as prostaglandin E2 (PGE2), which plays an important role in cytoprotection. In platelets, it is involved in the generation of thromboxane A2 (TXA2), which promotes platelet activation and aggregation, vasoconstriction and proliferation of vascular smooth muscle cells. Can also use linoleate (LA, (9Z,12Z)-octadecadienoate, C18:2(n-6)) as substrate and produce hydroxyoctadecadienoates (HODEs) in a regio- and stereospecific manner, being (9R)-HODE ((9R)-hydroxy-(10E,12Z)-octadecadienoate) and (13S)-HODE ((13S)-hydroxy-(9Z,11E)-octadecadienoate) its major products. This Homo sapiens (Human) protein is Prostaglandin G/H synthase 1.